The following is a 170-amino-acid chain: Peptide deformylase 2 (170 aa).

Fe cation-binding residues include Cys-94 and His-136. Glu-137 is an active-site residue. Residue His-140 coordinates Fe cation.

The protein belongs to the polypeptide deformylase family. Fe(2+) serves as cofactor.

It catalyses the reaction N-terminal N-formyl-L-methionyl-[peptide] + H2O = N-terminal L-methionyl-[peptide] + formate. In terms of biological role, removes the formyl group from the N-terminal Met of newly synthesized proteins. Requires at least a dipeptide for an efficient rate of reaction. N-terminal L-methionine is a prerequisite for activity but the enzyme has broad specificity at other positions. This Xanthomonas campestris pv. campestris (strain ATCC 33913 / DSM 3586 / NCPPB 528 / LMG 568 / P 25) protein is Peptide deformylase 2.